Consider the following 347-residue polypeptide: Ornithine transcarbamylase, mitochondrial (347 aa).

Residues 1–25 (MINSISNTVLLKSVVSKRFFSSSAK) constitute a mitochondrion transit peptide. Carbamoyl phosphate-binding positions include 84–87 (STRT), Arg135, His162, and Gln165. Residues Asn194, Asp258, Ser262, and Met263 each coordinate L-ornithine. Residue Cys300 is the Proton acceptor of the active site. Residues 300-301 (CL) and Arg328 contribute to the carbamoyl phosphate site.

It belongs to the aspartate/ornithine carbamoyltransferase superfamily. OTCase family.

The protein localises to the mitochondrion matrix. The catalysed reaction is carbamoyl phosphate + L-ornithine = L-citrulline + phosphate + H(+). It participates in amino-acid biosynthesis; L-arginine biosynthesis; L-arginine from L-ornithine and carbamoyl phosphate: step 1/3. The polypeptide is Ornithine transcarbamylase, mitochondrial (OTC) (Pachysolen tannophilus (Yeast)).